A 174-amino-acid polypeptide reads, in one-letter code: UPF0316 protein Dhaf_3052 (174 aa).

Helical transmembrane passes span 4–24, 35–55, and 59–79; these read ILQF…LTTI, VYAS…LSII, and LDSY…VYLG.

It belongs to the UPF0316 family.

The protein resides in the cell membrane. The polypeptide is UPF0316 protein Dhaf_3052 (Desulfitobacterium hafniense (strain DSM 10664 / DCB-2)).